A 22-amino-acid chain; its full sequence is Chymotrypsin inhibitor (22 aa).

Positions 1–22 (FDESFGFQGPSTYEKTPLGEPA) are disordered.

As to expression, hemolymph.

The protein resides in the secreted. It is found in the extracellular space. Inhibits chymotrypsin stoichiometrically. Also inhibits porcine pancreatic elastase and trypsin. The sequence is that of Chymotrypsin inhibitor from Mythimna unipuncta (Armyworm moth).